The sequence spans 233 residues: Protein Thf1 (233 aa).

A coiled-coil region spans residues 183 to 204; that stretch reads DKFSKDLELYRSNLDKMTQALA. The disordered stretch occupies residues 212–233; that stretch reads ADRKKREQRQQQASTPVAPPNE.

This sequence belongs to the THF1 family.

Functionally, may be involved in photosynthetic membrane biogenesis. The sequence is that of Protein Thf1 from Nostoc sp. (strain PCC 7120 / SAG 25.82 / UTEX 2576).